The primary structure comprises 956 residues: Isoleucine--tRNA ligase (956 aa).

The 'HIGH' region signature appears at 60–70 (PYANGHIHVGH). Glutamate 583 lines the L-isoleucyl-5'-AMP pocket. Positions 624–628 (KMSKS) match the 'KMSKS' region motif. Position 627 (lysine 627) interacts with ATP. Cysteine 921, cysteine 924, cysteine 938, and cysteine 941 together coordinate Zn(2+).

It belongs to the class-I aminoacyl-tRNA synthetase family. IleS type 1 subfamily. In terms of assembly, monomer. Zn(2+) is required as a cofactor.

It localises to the cytoplasm. It catalyses the reaction tRNA(Ile) + L-isoleucine + ATP = L-isoleucyl-tRNA(Ile) + AMP + diphosphate. Its function is as follows. Catalyzes the attachment of isoleucine to tRNA(Ile). As IleRS can inadvertently accommodate and process structurally similar amino acids such as valine, to avoid such errors it has two additional distinct tRNA(Ile)-dependent editing activities. One activity is designated as 'pretransfer' editing and involves the hydrolysis of activated Val-AMP. The other activity is designated 'posttransfer' editing and involves deacylation of mischarged Val-tRNA(Ile). This chain is Isoleucine--tRNA ligase, found in Aquifex aeolicus (strain VF5).